The primary structure comprises 536 residues: Inactive phospholipase D5 (536 aa).

Residues Ile69–Val89 form a helical membrane-spanning segment. N-linked (GlcNAc...) asparagine glycosylation occurs at Asn121. In terms of domain architecture, PLD phosphodiesterase 1 spans Asn215–Ser242. The N-linked (GlcNAc...) asparagine glycan is linked to Asn302. One can recognise a PLD phosphodiesterase 2 domain in the interval Phe434–Asp460.

It belongs to the phospholipase D family.

It localises to the membrane. The sequence is that of Inactive phospholipase D5 (PLD5) from Homo sapiens (Human).